The following is a 40-amino-acid chain: Photosystem II reaction center protein J (40 aa).

The chain crosses the membrane as a helical span at residues 8 to 28 (IPLWIVGTVTGILVIGLIGVF).

This sequence belongs to the PsbJ family. As to quaternary structure, PSII is composed of 1 copy each of membrane proteins PsbA, PsbB, PsbC, PsbD, PsbE, PsbF, PsbH, PsbI, PsbJ, PsbK, PsbL, PsbM, PsbT, PsbX, PsbY, PsbZ, Psb30/Ycf12, at least 3 peripheral proteins of the oxygen-evolving complex and a large number of cofactors. It forms dimeric complexes.

It is found in the plastid. Its subcellular location is the chloroplast thylakoid membrane. In terms of biological role, one of the components of the core complex of photosystem II (PSII). PSII is a light-driven water:plastoquinone oxidoreductase that uses light energy to abstract electrons from H(2)O, generating O(2) and a proton gradient subsequently used for ATP formation. It consists of a core antenna complex that captures photons, and an electron transfer chain that converts photonic excitation into a charge separation. In Coffea arabica (Arabian coffee), this protein is Photosystem II reaction center protein J.